The sequence spans 752 residues: Double zinc ribbon and ankyrin repeat-containing protein 1 (752 aa).

2 positions are modified to phosphoserine: S160 and S182. Positions 164–187 (IPAYGGGSGSRPPTRQSQSPGFAH) are disordered. Positions 174–183 (RPPTRQSQSP) are enriched in polar residues. 2 consecutive DZANK-type zinc fingers follow at residues 211–270 (CAHC…CVVC) and 339–387 (CYRC…GSCG). ANK repeat units lie at residues 605–636 (ENRL…DPNC) and 640–669 (DNRP…DIDQ).

In terms of assembly, interacts with NINL isoform 2. Associates with DYNC1H1 and multiple dynein intermediate and light chains as well as actin-binding proteins.

Its subcellular location is the cytoplasm. It is found in the cytoskeleton. The protein localises to the microtubule organizing center. It localises to the centrosome. The protein resides in the cilium basal body. In terms of biological role, involved in vesicle transport in photoreceptor cells. The sequence is that of Double zinc ribbon and ankyrin repeat-containing protein 1 from Homo sapiens (Human).